We begin with the raw amino-acid sequence, 163 residues long: MGGLLLAAFLALVSVPRAQAVWLGRLDPEQLLGPWYVLAVASREKGFAMEKDMKNVVGVVVTLTPENNLRTLSSQHGLGGCDQSVMDLIKRNSGWVFENPSIGVLELWVLATNFRDYAIIFTQLEFGDEPFNTVELYSLTETASQEAMGLFTKWSRSLGFLSQ.

Residues 1–20 form the signal peptide; the sequence is MGGLLLAAFLALVSVPRAQA.

This sequence belongs to the calycin superfamily. Lipocalin family. Predominantly expressed in epididymis.

The protein localises to the secreted. May play a role in male fertility. The chain is Epididymal-specific lipocalin-6 (LCN6) from Homo sapiens (Human).